The primary structure comprises 211 residues: HTH-type transcriptional regulator AlkX (211 aa).

An HTH tetR-type domain is found at 22–82 (ALLRDSVLDA…GYALRLADRL (61 aa)). Residues 45–64 (TLSDVARAAGISRQTIYNEF) constitute a DNA-binding region (H-T-H motif).

Homodimer.

The protein localises to the cytoplasm. Its activity is regulated as follows. DNA-binding activity may be regulated by fatty acids. Represses the expression of the alkB-rubAB operon, which encodes the alkane hydroxylase AlkB and the rubredoxins RubA and RubB. Acts by binding to the promoter region of the operon. In addition, EMSA analysis show that AlkX can bind to the promoter region of mmpS1 and mmpL3 and to the intragenic region of mmpL11, suggesting that it may participate in the regulatory network that controls the expression of MmpL lipid transporters. This Mycobacterium tuberculosis (strain ATCC 25618 / H37Rv) protein is HTH-type transcriptional regulator AlkX.